Reading from the N-terminus, the 501-residue chain is Melianol synthase CYP71BQ5 (501 aa).

Residues 1–21 (MEFRLPVLLSFLLFFLMLVRH) traverse the membrane as a helical segment. C439 is a heme binding site.

This sequence belongs to the cytochrome P450 family. Heme serves as cofactor. In terms of tissue distribution, mainly expressed in petioles and roots, and, to a lower extent, in leaves.

Its subcellular location is the membrane. The catalysed reaction is dihydroniloticin + 2 reduced [NADPH--hemoprotein reductase] + 2 O2 = melianol + 2 oxidized [NADPH--hemoprotein reductase] + 3 H2O + 2 H(+). It participates in secondary metabolite biosynthesis; terpenoid biosynthesis. In terms of biological role, monooxygenase involved in the biosynthesis of limonoids triterpene natural products such as azadirachtin, an antifeedant widely used as bioinsecticide, and possessing many medicinal applications including anti-tumoral, anti-malarial, anti-rheumatic, antibacterial, anti-inflammatory, anti-pyretic and diuretic effects. Catalyzes the conversion of dihydroniloticin to the protolimonoid melianol. This is Melianol synthase CYP71BQ5 from Melia azedarach (Chinaberry tree).